A 267-amino-acid polypeptide reads, in one-letter code: Ribosomal RNA small subunit methyltransferase J (267 aa).

Residues 133–134 (ER) and Asp187 each bind S-adenosyl-L-methionine.

The protein belongs to the methyltransferase superfamily. RsmJ family.

It localises to the cytoplasm. It carries out the reaction guanosine(1516) in 16S rRNA + S-adenosyl-L-methionine = N(2)-methylguanosine(1516) in 16S rRNA + S-adenosyl-L-homocysteine + H(+). Specifically methylates the guanosine in position 1516 of 16S rRNA. In Halorhodospira halophila (strain DSM 244 / SL1) (Ectothiorhodospira halophila (strain DSM 244 / SL1)), this protein is Ribosomal RNA small subunit methyltransferase J.